Reading from the N-terminus, the 403-residue chain is Tripartite motif-containing protein 59 (403 aa).

The RING-type zinc finger occupies 10–60 (CPICYSIFEDPRVLPCSHTFCRNCLENILQASGNFYIWRPLRIPLKCPNCR). The B box-type zinc finger occupies 92–134 (PDIVTCPEHYRQPLNVYCLLDKKLVCGHCLTIGQHHGHPIDDL). 4 residues coordinate Zn(2+): cysteine 97, histidine 100, cysteine 120, and histidine 126. Residues 163 to 246 (LIEKLKEQKS…ALTISLQEES (84 aa)) are a coiled coil. Residues 329–349 (ILNIVVVTLISVILMSILFFN) form a helical membrane-spanning segment.

The protein belongs to the TRIM/RBCC family. Interacts with ECSIT.

The protein localises to the endoplasmic reticulum membrane. It catalyses the reaction S-ubiquitinyl-[E2 ubiquitin-conjugating enzyme]-L-cysteine + [acceptor protein]-L-lysine = [E2 ubiquitin-conjugating enzyme]-L-cysteine + N(6)-ubiquitinyl-[acceptor protein]-L-lysine.. The protein operates within protein modification; protein ubiquitination. Functionally, E3 ubiquitin ligase involved in different processes such as development and immune response. Serves as a negative regulator for innate immune signaling pathways by suppressing RLR-induced activation of IRF3/7 and NF-kappa-B via interaction with adapter ECSIT. Regulates autophagy through modulating both the transcription and the ubiquitination of BECN1. On the one hand, regulates the transcription of BECN1 through negatively modulating the NF-kappa-B pathway. On the other hand, regulates TRAF6-mediated 'Lys-63'-linked ubiquitination of BECN1, thus affecting the formation of the BECN1-PIK3C3 complex. In addition, mediates 'Lys-48'-linked ubiquitination of TRAF6 and thereby promotes TRAF6 proteasomal degradation. Also acts as a critical regulator for early embryo development from blastocyst stage to gastrula through modulating F-actin assembly and WASH1 'Lys-63'-linked ubiquitination. The chain is Tripartite motif-containing protein 59 (TRIM59) from Homo sapiens (Human).